Consider the following 340-residue polypeptide: GTP 3',8-cyclase (340 aa).

Positions 8–227 constitute a Radical SAM core domain; sequence KLGRPIRDLR…TMIEQHFEID (220 aa). R17 provides a ligand contact to GTP. C24 and C28 together coordinate [4Fe-4S] cluster. Y30 provides a ligand contact to S-adenosyl-L-methionine. C31 contributes to the [4Fe-4S] cluster binding site. Residue R71 participates in GTP binding. Residue G75 coordinates S-adenosyl-L-methionine. Residue T102 coordinates GTP. S126 contacts S-adenosyl-L-methionine. Residue K163 participates in GTP binding. Position 197 (M197) interacts with S-adenosyl-L-methionine. C261 and C264 together coordinate [4Fe-4S] cluster. 266–268 lines the GTP pocket; the sequence is RAR. C278 contributes to the [4Fe-4S] cluster binding site.

Belongs to the radical SAM superfamily. MoaA family. Monomer and homodimer. [4Fe-4S] cluster serves as cofactor.

The catalysed reaction is GTP + AH2 + S-adenosyl-L-methionine = (8S)-3',8-cyclo-7,8-dihydroguanosine 5'-triphosphate + 5'-deoxyadenosine + L-methionine + A + H(+). It participates in cofactor biosynthesis; molybdopterin biosynthesis. Functionally, catalyzes the cyclization of GTP to (8S)-3',8-cyclo-7,8-dihydroguanosine 5'-triphosphate. This chain is GTP 3',8-cyclase, found in Staphylococcus aureus (strain USA300).